The chain runs to 193 residues: Phosphatidylglycerophosphatase and protein-tyrosine phosphatase 1 (193 aa).

The transit peptide at 1–31 directs the protein to the mitochondrion; that stretch reads MAASAWLEAGLARVLFYPTLLYTVFRGRVRG. The Tyrosine-protein phosphatase domain occupies 37–188; the sequence is WYHRIDHTVL…LKEFHKEITA (152 aa). K85 is modified (N6-succinyllysine). The Phosphocysteine intermediate role is filled by C132.

It belongs to the protein-tyrosine phosphatase family. Non-receptor class dual specificity subfamily. As to quaternary structure, interacts with STYXL1; the interaction inhibits PTPMT1 catalytic activity. Predominantly expressed in testis. Expressed at lower level in heart, brain, spleen, lung, liver, skeletal muscle, kidney, bone marrow, eye, lymph node, smooth muscle, prostate, thymus, stomach and uterus.

Its subcellular location is the mitochondrion inner membrane. It catalyses the reaction a 1,2-diacyl-sn-glycero-3-phospho-(1'-sn-glycero-3'-phosphate) + H2O = a 1,2-diacyl-sn-glycero-3-phospho-(1'-sn-glycerol) + phosphate. The enzyme catalyses O-phospho-L-tyrosyl-[protein] + H2O = L-tyrosyl-[protein] + phosphate. It carries out the reaction O-phospho-L-seryl-[protein] + H2O = L-seryl-[protein] + phosphate. The catalysed reaction is O-phospho-L-threonyl-[protein] + H2O = L-threonyl-[protein] + phosphate. It catalyses the reaction 1,2-di-(9Z-octadecenoyl)-sn-glycero-3-phospho-(1'-sn-glycerol-3'-phosphate) + H2O = 1,2-di-(9Z-octadecenoyl)-sn-glycero-3-phospho-(1'-sn-glycerol) + phosphate. The enzyme catalyses 1,2-dioctanoyl-sn-glycero-3-phospho-(1D-myo-inositol-5-phosphate) + H2O = 1,2-dioctanoyl-sn-glycero-3-phospho-(1D-myo-inositol) + phosphate. It carries out the reaction a 1-acyl-2-hexanoyl-sn-glycero-3-phospho-(1D-myo-inositol-5-phosphate) + H2O = a 1-acyl-2-hexanoyl-sn-glycero-3-phospho-(1D-myo-inositol) + phosphate. The catalysed reaction is 1,2-dibutyryl-sn-glycero-3-phospho-(1D-myo-inositol-5-phosphate) + H2O = 1,2-dibutyryl-sn-glycero-3-phospho-(1D-myo-inositol) + phosphate. It functions in the pathway phospholipid metabolism; phosphatidylglycerol biosynthesis; phosphatidylglycerol from CDP-diacylglycerol: step 2/2. Its function is as follows. Lipid phosphatase which dephosphorylates phosphatidylglycerophosphate (PGP) to phosphatidylglycerol (PG). PGP is an essential intermediate in the biosynthetic pathway of cardiolipin, a mitochondrial-specific phospholipid regulating the membrane integrity and activities of the organelle. Has also been shown to display phosphatase activity toward phosphoprotein substrates, specifically mediates dephosphorylation of mitochondrial proteins, thereby playing an essential role in ATP production. Has probably a preference for proteins phosphorylated on Ser and/or Thr residues compared to proteins phosphorylated on Tyr residues. Probably involved in regulation of insulin secretion in pancreatic beta cells. May prevent intrinsic apoptosis, probably by regulating mitochondrial membrane integrity. The polypeptide is Phosphatidylglycerophosphatase and protein-tyrosine phosphatase 1 (Mus musculus (Mouse)).